We begin with the raw amino-acid sequence, 497 residues long: Acetyl-coenzyme A carboxylase carboxyl transferase subunit beta, chloroplastic (497 aa).

Residues 230 to 497 (LWVQCENCYG…FFPLNQNSIK (268 aa)) form the CoA carboxyltransferase N-terminal domain. Cys234, Cys237, Cys253, and Cys256 together coordinate Zn(2+). The C4-type zinc finger occupies 234–256 (CENCYGLNYKKFLKSKMNICEQC).

Belongs to the AccD/PCCB family. Acetyl-CoA carboxylase is a heterohexamer composed of biotin carboxyl carrier protein, biotin carboxylase and 2 subunits each of ACCase subunit alpha and ACCase plastid-coded subunit beta (accD). It depends on Zn(2+) as a cofactor.

It localises to the plastid. Its subcellular location is the chloroplast stroma. It catalyses the reaction N(6)-carboxybiotinyl-L-lysyl-[protein] + acetyl-CoA = N(6)-biotinyl-L-lysyl-[protein] + malonyl-CoA. It participates in lipid metabolism; malonyl-CoA biosynthesis; malonyl-CoA from acetyl-CoA: step 1/1. Functionally, component of the acetyl coenzyme A carboxylase (ACC) complex. Biotin carboxylase (BC) catalyzes the carboxylation of biotin on its carrier protein (BCCP) and then the CO(2) group is transferred by the transcarboxylase to acetyl-CoA to form malonyl-CoA. The sequence is that of Acetyl-coenzyme A carboxylase carboxyl transferase subunit beta, chloroplastic from Carica papaya (Papaya).